The chain runs to 490 residues: Cytochrome P450 71A19 (490 aa).

Residues 3-23 (IILVTLCLTTLLALLLLKSIL) form a helical membrane-spanning segment. C433 is a heme binding site.

The protein belongs to the cytochrome P450 family. Requires heme as cofactor.

The protein resides in the membrane. This is Cytochrome P450 71A19 (CYP71A19) from Arabidopsis thaliana (Mouse-ear cress).